The sequence spans 205 residues: MIGKLKGLIDSYGEDYVILDVHGVGYQVHCSSRTLQALPSPGEAATLSIETYVREDQIKLFGFRTDHEREWFRLLQTVQSVGAKVALAVLSTLPPNDLANAIALRDKAAVARTPGVGPKVAERIVSELKDKVPALSNVDPAVVQLSGALDDNRAPRPVTDAISALVNLGYGQPQAAAAIAAAARAAGDDAATAQLIKLGLKELSK.

A domain I region spans residues 1–64 (MIGKLKGLID…EDQIKLFGFR (64 aa)). The domain II stretch occupies residues 65-143 (TDHEREWFRL…ALSNVDPAVV (79 aa)). Residues 144–154 (QLSGALDDNRA) form a flexible linker region. A domain III region spans residues 154 to 205 (APRPVTDAISALVNLGYGQPQAAAAIAAAARAAGDDAATAQLIKLGLKELSK).

Belongs to the RuvA family. In terms of assembly, homotetramer. Forms an RuvA(8)-RuvB(12)-Holliday junction (HJ) complex. HJ DNA is sandwiched between 2 RuvA tetramers; dsDNA enters through RuvA and exits via RuvB. An RuvB hexamer assembles on each DNA strand where it exits the tetramer. Each RuvB hexamer is contacted by two RuvA subunits (via domain III) on 2 adjacent RuvB subunits; this complex drives branch migration. In the full resolvosome a probable DNA-RuvA(4)-RuvB(12)-RuvC(2) complex forms which resolves the HJ.

It is found in the cytoplasm. Functionally, the RuvA-RuvB-RuvC complex processes Holliday junction (HJ) DNA during genetic recombination and DNA repair, while the RuvA-RuvB complex plays an important role in the rescue of blocked DNA replication forks via replication fork reversal (RFR). RuvA specifically binds to HJ cruciform DNA, conferring on it an open structure. The RuvB hexamer acts as an ATP-dependent pump, pulling dsDNA into and through the RuvAB complex. HJ branch migration allows RuvC to scan DNA until it finds its consensus sequence, where it cleaves and resolves the cruciform DNA. This is Holliday junction branch migration complex subunit RuvA from Rhodopseudomonas palustris (strain BisB5).